We begin with the raw amino-acid sequence, 339 residues long: Sperm acrosome membrane-associated protein 6 (339 aa).

Residues 1–41 (MTSQRSLSSPQTRRPSVMGLISLVGSIVLLFLLIFRASTWA) form the signal peptide. The CXXC motif signature appears at 42 to 45 (CLFC). 6 cysteine pairs are disulfide-bonded: Cys42/Cys155, Cys45/Cys158, Cys56/Cys70, Cys140/Cys163, Cys144/Cys169, and Cys186/Cys241. Residues 42–310 (CLFCFTTYEE…NPQALTLGNL (269 aa)) lie on the Extracellular side of the membrane. The short motif at 155–158 (CSGC) is the CXXC motif element. The Ig-like domain maps to 166-251 (PLDCPVQDML…VILHDQRPLA (86 aa)). An N-linked (GlcNAc...) asparagine glycan is attached at Asn258. A helical membrane pass occupies residues 311-331 (FLLAATAALGSASVTLLVWLF). The Cytoplasmic portion of the chain corresponds to 332 to 339 (FRWYLSGN).

The protein belongs to the SPACA6 family. Forms a complex with IZUMO1 and TMEM81 on spermatocyte cell membrane required for fertilization. Highly expressed in testis. Minor expression also detected in epididymis, seminal vesicle and ovary. Predominantly expressed in testicular germ cells during spermiogenesis. Most abundant in round spermatids and detected at lower levels in elongating spermatids.

The protein localises to the cytoplasmic vesicle. It is found in the secretory vesicle. It localises to the acrosome membrane. Its function is as follows. Sperm protein required for fusion of sperm with the egg membrane during fertilization. May regulate the expression of sperm surface protein DCST2. The chain is Sperm acrosome membrane-associated protein 6 from Mus musculus (Mouse).